Here is a 497-residue protein sequence, read N- to C-terminus: Glycerol kinase (497 aa).

Residue threonine 12 coordinates ADP. ATP is bound by residues threonine 12, threonine 13, and serine 14. Threonine 12 lines the sn-glycerol 3-phosphate pocket. Arginine 16 serves as a coordination point for ADP. The sn-glycerol 3-phosphate site is built by arginine 82, glutamate 83, tyrosine 134, and aspartate 243. Positions 82, 83, 134, 243, and 244 each coordinate glycerol. ADP-binding residues include threonine 265 and glycine 308. Positions 265, 308, 312, and 409 each coordinate ATP. Residues glycine 409 and asparagine 413 each coordinate ADP.

It belongs to the FGGY kinase family.

It catalyses the reaction glycerol + ATP = sn-glycerol 3-phosphate + ADP + H(+). The protein operates within polyol metabolism; glycerol degradation via glycerol kinase pathway; sn-glycerol 3-phosphate from glycerol: step 1/1. With respect to regulation, inhibited by fructose 1,6-bisphosphate (FBP). Key enzyme in the regulation of glycerol uptake and metabolism. Catalyzes the phosphorylation of glycerol to yield sn-glycerol 3-phosphate. The polypeptide is Glycerol kinase (Solidesulfovibrio magneticus (strain ATCC 700980 / DSM 13731 / RS-1) (Desulfovibrio magneticus)).